A 119-amino-acid polypeptide reads, in one-letter code: Protein TusC (119 aa).

This sequence belongs to the DsrF/TusC family. In terms of assembly, heterohexamer, formed by a dimer of trimers. The hexameric TusBCD complex contains 2 copies each of TusB, TusC and TusD. The TusBCD complex interacts with TusE.

The protein resides in the cytoplasm. Its function is as follows. Part of a sulfur-relay system required for 2-thiolation of 5-methylaminomethyl-2-thiouridine (mnm(5)s(2)U) at tRNA wobble positions. This chain is Protein TusC, found in Shigella sonnei (strain Ss046).